The sequence spans 307 residues: 1-phosphofructokinase (307 aa).

Residues 217-222 (SMGSDG) and 249-250 (GD) contribute to the ATP site. The active-site Proton acceptor is the D250.

Belongs to the carbohydrate kinase PfkB family.

The enzyme catalyses beta-D-fructose 1-phosphate + ATP = beta-D-fructose 1,6-bisphosphate + ADP + H(+). Its function is as follows. Catalyzes the ATP-dependent phosphorylation of fructose-l-phosphate to fructose-l,6-bisphosphate. The sequence is that of 1-phosphofructokinase (fruK) from Borreliella burgdorferi (strain ATCC 35210 / DSM 4680 / CIP 102532 / B31) (Borrelia burgdorferi).